A 150-amino-acid chain; its full sequence is Macrodomain Ter protein (150 aa).

This sequence belongs to the MatP family. Homodimer.

It localises to the cytoplasm. In terms of biological role, required for spatial organization of the terminus region of the chromosome (Ter macrodomain) during the cell cycle. Prevents early segregation of duplicated Ter macrodomains during cell division. Binds specifically to matS, which is a 13 bp signature motif repeated within the Ter macrodomain. This is Macrodomain Ter protein from Shigella boydii serotype 18 (strain CDC 3083-94 / BS512).